Here is a 767-residue protein sequence, read N- to C-terminus: Protein ROLLING AND ERECT LEAF 2 (767 aa).

Disordered stretches follow at residues 1–20 (MGCTASKVEQEDTVRRCKER), 78–187 (PALA…SEFF), and 201–309 (RELE…SSTV). Composition is skewed to pro residues over residues 81–90 (APTPTPPPPS) and 110–126 (APPPPPPTQSHQPPPPV). Low complexity predominate over residues 145 to 155 (SDSSVASPARS). The span at 201 to 210 (RELEEEEKAR) shows a compositional bias: basic and acidic residues. Residues 221–232 (EDEVDDDDDERE) show a composition bias toward acidic residues. Basic and acidic residues predominate over residues 255 to 264 (TRSEEGEMGN).

As to expression, highly expressed in young leaves and panicles. Expressed at low levels in roots.

It is found in the cell membrane. In terms of biological role, involved in the regulation of leaf shape formation. May function by coordinating the expression of genes associated with leaf and bulliform cell development. The sequence is that of Protein ROLLING AND ERECT LEAF 2 from Oryza sativa subsp. japonica (Rice).